The chain runs to 160 residues: Lipoprotein signal peptidase (160 aa).

A run of 3 helical transmembrane segments spans residues 5–25, 60–80, and 84–104; these read LVFF…KFII, IEWL…AFFI, and LPFL…AGTV. Catalysis depends on residues Asp-118 and Asp-132. A helical membrane pass occupies residues 128 to 148; it reads FNIADSCLTVGVIGLLLLYIV.

Belongs to the peptidase A8 family.

The protein resides in the cell membrane. It carries out the reaction Release of signal peptides from bacterial membrane prolipoproteins. Hydrolyzes -Xaa-Yaa-Zaa-|-(S,diacylglyceryl)Cys-, in which Xaa is hydrophobic (preferably Leu), and Yaa (Ala or Ser) and Zaa (Gly or Ala) have small, neutral side chains.. The protein operates within protein modification; lipoprotein biosynthesis (signal peptide cleavage). This protein specifically catalyzes the removal of signal peptides from prolipoproteins. The polypeptide is Lipoprotein signal peptidase (Dehalococcoides mccartyi (strain ATCC BAA-2100 / JCM 16839 / KCTC 5957 / BAV1)).